The sequence spans 259 residues: Zinc import ATP-binding protein ZnuC (259 aa).

The ABC transporter domain occupies V22–H238. G54–S61 contributes to the ATP binding site.

This sequence belongs to the ABC transporter superfamily. Zinc importer (TC 3.A.1.15.5) family. In terms of assembly, the complex is composed of two ATP-binding proteins (ZnuC), two transmembrane proteins (ZnuB) and a solute-binding protein (ZnuA).

The protein localises to the cell inner membrane. It carries out the reaction Zn(2+)(out) + ATP(in) + H2O(in) = Zn(2+)(in) + ADP(in) + phosphate(in) + H(+)(in). Part of the ABC transporter complex ZnuABC involved in zinc import. Responsible for energy coupling to the transport system. This is Zinc import ATP-binding protein ZnuC from Alkalilimnicola ehrlichii (strain ATCC BAA-1101 / DSM 17681 / MLHE-1).